A 249-amino-acid polypeptide reads, in one-letter code: Serine acetyltransferase (249 aa).

It belongs to the transferase hexapeptide repeat family.

The protein localises to the cytoplasm. It carries out the reaction L-serine + acetyl-CoA = O-acetyl-L-serine + CoA. Its pathway is amino-acid biosynthesis; L-cysteine biosynthesis; L-cysteine from L-serine: step 1/2. This is Serine acetyltransferase (cysE) from Synechocystis sp. (strain ATCC 27184 / PCC 6803 / Kazusa).